A 336-amino-acid polypeptide reads, in one-letter code: Telomere-binding protein cav (336 aa).

The interval 107–328 (RKKMVQPYPE…TITFQNSESE (222 aa)) is required for binding to Su(var)205. Disordered stretches follow at residues 137–158 (RLDR…SPAR) and 199–218 (SSDL…SEFQ). 2 consecutive short sequence motifs (su(var)205-binding Pro-containing repeat) follow at residues 225–231 (PETAINE) and 289–295 (PETEMNE). The span at 308-327 (MSIGPSIDSEGTITFQNSES) shows a compositional bias: polar residues. Residues 308 to 336 (MSIGPSIDSEGTITFQNSESEPIDVDSIA) are disordered.

As to quaternary structure, interacts (via C-terminus) with Su(var)205 dimer (via hinge and chromoshadow domain) and with moi to form the terminin, telomere-capping, complex. Interacts with HP6, which is also part of the terminin complex.

The protein localises to the nucleus. The protein resides in the chromosome. Its subcellular location is the telomere. Its function is as follows. Binds to chromosome ends in a sequence-dependent manner and is required for telomere capping. The chain is Telomere-binding protein cav from Drosophila sechellia (Fruit fly).